The following is a 326-amino-acid chain: DNA-directed RNA polymerase subunit alpha (326 aa).

Residues 1-231 (MQSNALLKPR…DQLSVFADLE (231 aa)) form an alpha N-terminal domain (alpha-NTD) region. The interval 245 to 326 (IDPVLLRPVD…WPPAGLEKLG (82 aa)) is alpha C-terminal domain (alpha-CTD).

This sequence belongs to the RNA polymerase alpha chain family. Homodimer. The RNAP catalytic core consists of 2 alpha, 1 beta, 1 beta' and 1 omega subunit. When a sigma factor is associated with the core the holoenzyme is formed, which can initiate transcription.

The catalysed reaction is RNA(n) + a ribonucleoside 5'-triphosphate = RNA(n+1) + diphosphate. Functionally, DNA-dependent RNA polymerase catalyzes the transcription of DNA into RNA using the four ribonucleoside triphosphates as substrates. In Azoarcus sp. (strain BH72), this protein is DNA-directed RNA polymerase subunit alpha.